The sequence spans 519 residues: Cyclin-dependent kinase C-1 (519 aa).

Residues 25 to 325 enclose the Protein kinase domain; the sequence is FEKLEQIGEG…AQDALDAEYF (301 aa). Residues 31-39 and lysine 54 contribute to the ATP site; that span reads IGEGTYGQV. Threonine 35 bears the Phosphothreonine mark. Tyrosine 36 bears the Phosphotyrosine mark. Aspartate 164 (proton acceptor) is an active-site residue. At threonine 198 the chain carries Phosphothreonine. A compositionally biased stretch (basic and acidic residues) spans 336-348; sequence SLPKYESSHEFQT. The disordered stretch occupies residues 336 to 519; that stretch reads SLPKYESSHE…RNQQQYGNWQ (184 aa). A compositionally biased stretch (gly residues) spans 426 to 444; it reads GNQGGGYPNRGGQGGGGSY. Residues 445–454 are compositionally biased toward low complexity; the sequence is GNAPYPQQGR. 2 stretches are compositionally biased toward gly residues: residues 464–483 and 490–499; these read GMAG…GGGS and GPYGPSGPGR. Polar residues predominate over residues 505-519; sequence QQGGSRNQQQYGNWQ.

Belongs to the protein kinase superfamily. CMGC Ser/Thr protein kinase family. CDC2/CDKX subfamily.

It carries out the reaction L-seryl-[protein] + ATP = O-phospho-L-seryl-[protein] + ADP + H(+). The enzyme catalyses L-threonyl-[protein] + ATP = O-phospho-L-threonyl-[protein] + ADP + H(+). It catalyses the reaction [DNA-directed RNA polymerase] + ATP = phospho-[DNA-directed RNA polymerase] + ADP + H(+). The protein is Cyclin-dependent kinase C-1 (CDKC-1) of Oryza sativa subsp. japonica (Rice).